Here is an 885-residue protein sequence, read N- to C-terminus: DNA mismatch repair protein MutS (885 aa).

ATP is bound at residue 626–633; that stretch reads GPNMGGKS.

It belongs to the DNA mismatch repair MutS family.

This protein is involved in the repair of mismatches in DNA. It is possible that it carries out the mismatch recognition step. This protein has a weak ATPase activity. In Burkholderia lata (strain ATCC 17760 / DSM 23089 / LMG 22485 / NCIMB 9086 / R18194 / 383), this protein is DNA mismatch repair protein MutS.